The sequence spans 258 residues: MAPKRGGRAPVPAKKKTEKVTNPLFEKRPKQFGIGGALPPKKDLHRFVKWPKVVRIQRQRRILKQRLKVPPALNQFTRTLDKNLATNLFKMLLKYRPEDKAAKKERLLKRAQAEAEGKTVEAKKPIVVKYGLNHVTYLIEQSKAQLVVIAHDVDPIELVVWLPALCRKMEVPYCIVKGKARLGSIVHKKTASVLCLTTVKNEDKLEFSKILEAIKANFNDKFDEVRKKWGGGVMGSKSQAKTKAREKLLAKEAAQRMT.

Residues 1 to 20 (MAPKRGGRAPVPAKKKTEKV) form a disordered region.

Belongs to the eukaryotic ribosomal protein eL8 family.

The polypeptide is Large ribosomal subunit protein eL8z (RPL7A-1) (Oryza sativa subsp. japonica (Rice)).